The sequence spans 75 residues: Carwaprin-a (75 aa).

Positions 1 to 24 (MSSGGLLLLLGLLTLWAELTPISG) are cleaved as a signal peptide. Residues 27-72 (RPKKPGLCPPRPQKPPCVRECKNDWRCPGEQKCCRYGCIYECRDPI) enclose the WAP domain. 4 cysteine pairs are disulfide-bonded: C34–C60, C43–C64, C47–C59, and C53–C68.

This sequence belongs to the venom waprin family. In terms of tissue distribution, expressed by the venom gland.

The protein resides in the secreted. In terms of biological role, damages membranes of susceptible bacteria. Has no hemolytic activity. Not toxic to mice. Does not inhibit the proteinases elastase and cathepsin G. The polypeptide is Carwaprin-a (Tropidechis carinatus (Australian rough-scaled snake)).